The following is a 276-amino-acid chain: Digeranylgeranylglyceryl phosphate synthase (276 aa).

7 helical membrane passes run 14-34 (NCIL…GHFP), 40-60 (LLIF…NDYF), 92-112 (FAVG…LGVI), 146-166 (GAVA…AFLV), 202-222 (VGVL…KASV), 224-244 (VGYY…YLIL), and 256-276 (QKLL…AAIV).

The protein belongs to the UbiA prenyltransferase family. DGGGP synthase subfamily. Mg(2+) is required as a cofactor.

It is found in the cell membrane. The catalysed reaction is sn-3-O-(geranylgeranyl)glycerol 1-phosphate + (2E,6E,10E)-geranylgeranyl diphosphate = 2,3-bis-O-(geranylgeranyl)-sn-glycerol 1-phosphate + diphosphate. It functions in the pathway membrane lipid metabolism; glycerophospholipid metabolism. Prenyltransferase that catalyzes the transfer of the geranylgeranyl moiety of geranylgeranyl diphosphate (GGPP) to the C2 hydroxyl of (S)-3-O-geranylgeranylglyceryl phosphate (GGGP). This reaction is the second ether-bond-formation step in the biosynthesis of archaeal membrane lipids. In Thermococcus onnurineus (strain NA1), this protein is Digeranylgeranylglyceryl phosphate synthase.